The sequence spans 105 residues: ATP synthase subunit c (105 aa).

2 consecutive transmembrane segments (helical) span residues 37 to 57 and 82 to 102; these read IGAGITMVGGATVGLGQGYIF and SAISESSSIYSLLIAFILIFV.

Belongs to the ATPase C chain family. F-type ATPases have 2 components, F(1) - the catalytic core - and F(0) - the membrane proton channel. F(1) has five subunits: alpha(3), beta(3), gamma(1), delta(1), epsilon(1). F(0) has three main subunits: a(1), b(2) and c(10-14). The alpha and beta chains form an alternating ring which encloses part of the gamma chain. F(1) is attached to F(0) by a central stalk formed by the gamma and epsilon chains, while a peripheral stalk is formed by the delta and b chains.

It localises to the cell membrane. Its function is as follows. F(1)F(0) ATP synthase produces ATP from ADP in the presence of a proton or sodium gradient. F-type ATPases consist of two structural domains, F(1) containing the extramembraneous catalytic core and F(0) containing the membrane proton channel, linked together by a central stalk and a peripheral stalk. During catalysis, ATP synthesis in the catalytic domain of F(1) is coupled via a rotary mechanism of the central stalk subunits to proton translocation. Functionally, key component of the F(0) channel; it plays a direct role in translocation across the membrane. A homomeric c-ring of between 10-14 subunits forms the central stalk rotor element with the F(1) delta and epsilon subunits. In Mycoplasma pneumoniae (strain ATCC 29342 / M129 / Subtype 1) (Mycoplasmoides pneumoniae), this protein is ATP synthase subunit c.